The chain runs to 341 residues: Anthranilate phosphoribosyltransferase (341 aa).

Residues Gly84, 94–97, 112–120, and Ser124 contribute to the 5-phospho-alpha-D-ribose 1-diphosphate site; these read NVST and KHGGRAASS. Gly84 serves as a coordination point for anthranilate. Residue Ser96 participates in Mg(2+) binding. Arg170 provides a ligand contact to anthranilate. Residues Asp229 and Glu230 each contribute to the Mg(2+) site.

Belongs to the anthranilate phosphoribosyltransferase family. In terms of assembly, homodimer. Requires Mg(2+) as cofactor.

It carries out the reaction N-(5-phospho-beta-D-ribosyl)anthranilate + diphosphate = 5-phospho-alpha-D-ribose 1-diphosphate + anthranilate. It participates in amino-acid biosynthesis; L-tryptophan biosynthesis; L-tryptophan from chorismate: step 2/5. In terms of biological role, catalyzes the transfer of the phosphoribosyl group of 5-phosphorylribose-1-pyrophosphate (PRPP) to anthranilate to yield N-(5'-phosphoribosyl)-anthranilate (PRA). The polypeptide is Anthranilate phosphoribosyltransferase (Methylobacillus flagellatus (strain ATCC 51484 / DSM 6875 / VKM B-1610 / KT)).